A 270-amino-acid chain; its full sequence is Orotidine 5'-phosphate decarboxylase (270 aa).

Substrate contacts are provided by residues aspartate 39, lysine 61 to histidine 63, aspartate 93 to threonine 102, tyrosine 221, and arginine 239. The Proton donor role is filled by lysine 95.

This sequence belongs to the OMP decarboxylase family.

The enzyme catalyses orotidine 5'-phosphate + H(+) = UMP + CO2. It functions in the pathway pyrimidine metabolism; UMP biosynthesis via de novo pathway; UMP from orotate: step 2/2. The polypeptide is Orotidine 5'-phosphate decarboxylase (URA3) (Candida dubliniensis (strain CD36 / ATCC MYA-646 / CBS 7987 / NCPF 3949 / NRRL Y-17841) (Yeast)).